The sequence spans 343 residues: General stress protein 30 (343 aa).

The protein belongs to the polysaccharide pyruvyl transferase family.

The sequence is that of General stress protein 30 (yxaB) from Bacillus subtilis (strain 168).